Consider the following 463-residue polypeptide: ATP-dependent protease ATPase subunit HslU (463 aa).

ATP is bound by residues valine 21, 63 to 68 (GVGKTE), aspartate 276, glutamate 341, and arginine 413.

Belongs to the ClpX chaperone family. HslU subfamily. As to quaternary structure, a double ring-shaped homohexamer of HslV is capped on each side by a ring-shaped HslU homohexamer. The assembly of the HslU/HslV complex is dependent on binding of ATP.

The protein resides in the cytoplasm. Functionally, ATPase subunit of a proteasome-like degradation complex; this subunit has chaperone activity. The binding of ATP and its subsequent hydrolysis by HslU are essential for unfolding of protein substrates subsequently hydrolyzed by HslV. HslU recognizes the N-terminal part of its protein substrates and unfolds these before they are guided to HslV for hydrolysis. This Thermotoga petrophila (strain ATCC BAA-488 / DSM 13995 / JCM 10881 / RKU-1) protein is ATP-dependent protease ATPase subunit HslU.